We begin with the raw amino-acid sequence, 305 residues long: GTP cyclohydrolase FolE2 (305 aa).

Belongs to the GTP cyclohydrolase IV family.

It carries out the reaction GTP + H2O = 7,8-dihydroneopterin 3'-triphosphate + formate + H(+). Its pathway is cofactor biosynthesis; 7,8-dihydroneopterin triphosphate biosynthesis; 7,8-dihydroneopterin triphosphate from GTP: step 1/1. Its function is as follows. Converts GTP to 7,8-dihydroneopterin triphosphate. The chain is GTP cyclohydrolase FolE2 from Xanthomonas axonopodis pv. citri (strain 306).